A 427-amino-acid polypeptide reads, in one-letter code: Imidazolonepropionase (427 aa).

2 residues coordinate Fe(3+): H96 and H98. H96 and H98 together coordinate Zn(2+). The 4-imidazolone-5-propanoate site is built by R105, Y168, and H201. Y168 contacts N-formimidoyl-L-glutamate. Residue H265 coordinates Fe(3+). H265 serves as a coordination point for Zn(2+). Q268 is a 4-imidazolone-5-propanoate binding site. D340 contacts Fe(3+). D340 is a Zn(2+) binding site. The N-formimidoyl-L-glutamate site is built by N342 and G344. Residue T345 participates in 4-imidazolone-5-propanoate binding.

Belongs to the metallo-dependent hydrolases superfamily. HutI family. Requires Zn(2+) as cofactor. Fe(3+) is required as a cofactor.

The protein localises to the cytoplasm. The catalysed reaction is 4-imidazolone-5-propanoate + H2O = N-formimidoyl-L-glutamate. It functions in the pathway amino-acid degradation; L-histidine degradation into L-glutamate; N-formimidoyl-L-glutamate from L-histidine: step 3/3. In terms of biological role, catalyzes the hydrolytic cleavage of the carbon-nitrogen bond in imidazolone-5-propanoate to yield N-formimidoyl-L-glutamate. It is the third step in the universal histidine degradation pathway. This is Imidazolonepropionase from Psychrobacter cryohalolentis (strain ATCC BAA-1226 / DSM 17306 / VKM B-2378 / K5).